Reading from the N-terminus, the 59-residue chain is Large ribosomal subunit protein uL30 (59 aa).

Belongs to the universal ribosomal protein uL30 family. Part of the 50S ribosomal subunit.

The protein is Large ribosomal subunit protein uL30 of Actinobacillus pleuropneumoniae serotype 7 (strain AP76).